The following is a 159-amino-acid chain: Transcriptional repressor NrdR (159 aa).

Over residues 1–11 (MQCPTCQNTDS) the composition is skewed to polar residues. The tract at residues 1 to 21 (MQCPTCQNTDSRVLESRSADS) is disordered. A zinc finger spans residues 3–34 (CPTCQNTDSRVLESRSADSGKSVRRRRECLNC). An ATP-cone domain is found at 49 to 139 (VSVLKKDGSR…VYRKFNGVKD (91 aa)).

The protein belongs to the NrdR family. Zn(2+) is required as a cofactor.

Functionally, negatively regulates transcription of bacterial ribonucleotide reductase nrd genes and operons by binding to NrdR-boxes. This chain is Transcriptional repressor NrdR, found in Prochlorococcus marinus (strain MIT 9301).